Reading from the N-terminus, the 604-residue chain is MAAVRGLRISVKAEATATTAEPRGPEPEPMEVEEGELETIPVRRSLRELIPDTSRRYENKAGSFITGIDVTSKEAIEKKEQRAKRFHFRAEVNLAQRNVALDRDMMKKAIPKVRLDTIYICGVDEMSTQDIFAYFKEYPPAHIEWLDDTSCNVVWLDEVTATRALINMSSFPDQEKPKGGENNEEKTAEKNKKEKQEESTDDETEEGEVEDENPSDIELDALTQVEEDSLLRNDLRPANKLAKGNKLFMRFATKDDKKELGAARRSQYYMKYGNPNYGGMKGILSNSWKRRYHSRRIHRDVIKKRTLIGDDVGLTPPYKHRHSGLVNVPEEPIEEEEEEEEVQDMDEDDRVVVEYRDDLQPFKQSRDRGAARRSSASASDSDEMDYDLELKMISTPSPKKSMKMTMYADEVESQLKNIRNSMRADSIATSNVKNRIGSKGLSDKVVDVRLLLEEKRQNNNGLRQPNSIVKSDVRQRLGKRPHSPEVKPPSSISAPRREPISDVHSRLGIPKQDVKGLYSDTREKKSGNLWTRLGSAPKTQEKTSDKPENSVASPEEDDSELQRVWGALIKEKGESRQKKSRLDNLPSLQIEISRESSSGSDTES.

Positions 1–36 are disordered; that stretch reads MAAVRGLRISVKAEATATTAEPRGPEPEPMEVEEGE. Residues 116 to 177 form an RNA recognition motif (RRM) domain region; the sequence is DTIYICGVDE…MSSFPDQEKP (62 aa). The WLDD motif; essential for 7-methylguanosine-containing mRNA cap binding motif lies at 145–148; the sequence is WLDD. 3 disordered regions span residues 168-219, 319-383, and 457-604; these read MSSF…DIEL, KHRH…DSDE, and QNNN…DTES. Over residues 173-198 the composition is skewed to basic and acidic residues; that stretch reads DQEKPKGGENNEEKTAEKNKKEKQEE. 2 stretches are compositionally biased toward acidic residues: residues 199-219 and 331-349; these read STDD…DIEL and EPIE…DEDD. Over residues 350 to 370 the composition is skewed to basic and acidic residues; the sequence is RVVVEYRDDLQPFKQSRDRGA. Residues 458 to 469 are compositionally biased toward polar residues; the sequence is NNNGLRQPNSIV. Composition is skewed to basic and acidic residues over residues 495-505, 539-548, and 569-582; these read PRREPISDVHS, TQEKTSDKPE, and IKEK…KSRL. Over residues 595-604 the composition is skewed to low complexity; that stretch reads ESSSGSDTES.

Belongs to the NCBP3 family. As to quaternary structure, component of an alternative cap-binding complex (CBC) composed of NCBP1/CBP80 and NCBP3.

Its subcellular location is the nucleus. The protein resides in the cytoplasm. Associates with NCBP1/CBP80 to form an alternative cap-binding complex (CBC) which plays a key role in mRNA export. NCBP3 serves as adapter protein linking the capped RNAs (m7GpppG-capped RNA) to NCBP1/CBP80. Unlike the conventional CBC with NCBP2 which binds both small nuclear RNA (snRNA) and messenger (mRNA) and is involved in their export from the nucleus, the alternative CBC with NCBP3 does not bind snRNA and associates only with mRNA thereby playing a role in only mRNA export. In Gallus gallus (Chicken), this protein is Nuclear cap-binding protein subunit 3.